The chain runs to 260 residues: Triosephosphate isomerase (260 aa).

A substrate-binding site is contributed by 11-13 (NWK). His-103 acts as the Electrophile in catalysis. Glu-175 serves as the catalytic Proton acceptor. Substrate is bound by residues Gly-181, Ser-220, and 241–242 (GG).

It belongs to the triosephosphate isomerase family. Homodimer.

The protein resides in the cytoplasm. The enzyme catalyses D-glyceraldehyde 3-phosphate = dihydroxyacetone phosphate. Its pathway is carbohydrate biosynthesis; gluconeogenesis. It functions in the pathway carbohydrate degradation; glycolysis; D-glyceraldehyde 3-phosphate from glycerone phosphate: step 1/1. Involved in the gluconeogenesis. Catalyzes stereospecifically the conversion of dihydroxyacetone phosphate (DHAP) to D-glyceraldehyde-3-phosphate (G3P). In Shewanella frigidimarina (strain NCIMB 400), this protein is Triosephosphate isomerase.